The primary structure comprises 266 residues: Beta-lactamase OXA-10 (266 aa).

The signal sequence occupies residues Met-1 to Ala-19. Cys-44 and Cys-51 form a disulfide bridge. Ser-67 serves as the catalytic Acyl-ester intermediate. Lys-70 bears the N6-carboxylysine mark. A beta-lactam contacts are provided by Ser-115, Thr-206, Phe-208, and Arg-250.

It belongs to the class-D beta-lactamase family. Dimer.

It is found in the periplasm. It catalyses the reaction a beta-lactam + H2O = a substituted beta-amino acid. Its activity is regulated as follows. Activated, with respect to most beta-lactam substrates, in the presence of 0.05 M sodium bicarbonate. Functionally, class D beta-lactamase which confers resistance to the beta-lactam antibiotics, including penicillin, carbenicillin and oxacillin, and also some cephalosporins. Confers weak resistance to some carbapenems, in E.coli strain C600Z1. Acts via hydrolysis of the beta-lactam ring. Has penicillin- and cephalosporin-hydrolyzing activities. This Pseudomonas aeruginosa protein is Beta-lactamase OXA-10.